Here is a 63-residue protein sequence, read N- to C-terminus: Large ribosomal subunit protein bL28 (63 aa).

It belongs to the bacterial ribosomal protein bL28 family.

In Clostridium perfringens (strain ATCC 13124 / DSM 756 / JCM 1290 / NCIMB 6125 / NCTC 8237 / Type A), this protein is Large ribosomal subunit protein bL28.